A 156-amino-acid polypeptide reads, in one-letter code: Endoribonuclease YbeY (156 aa).

Positions 122, 126, and 132 each coordinate Zn(2+).

This sequence belongs to the endoribonuclease YbeY family. Requires Zn(2+) as cofactor.

It localises to the cytoplasm. Its function is as follows. Single strand-specific metallo-endoribonuclease involved in late-stage 70S ribosome quality control and in maturation of the 3' terminus of the 16S rRNA. The chain is Endoribonuclease YbeY from Geobacillus kaustophilus (strain HTA426).